Consider the following 391-residue polypeptide: UPF0229 protein CA_C0580 (391 aa).

Disordered regions lie at residues 1-20 and 75-109; these read MAIF…TIGD and VGSG…NSEG. Gly residues predominate over residues 96–106; sequence GSKGKGKGAGN.

The protein belongs to the UPF0229 family.

The sequence is that of UPF0229 protein CA_C0580 from Clostridium acetobutylicum (strain ATCC 824 / DSM 792 / JCM 1419 / IAM 19013 / LMG 5710 / NBRC 13948 / NRRL B-527 / VKM B-1787 / 2291 / W).